The following is a 150-amino-acid chain: Large ribosomal subunit protein bL9 (150 aa).

This sequence belongs to the bacterial ribosomal protein bL9 family.

Functionally, binds to the 23S rRNA. In Limosilactobacillus fermentum (strain NBRC 3956 / LMG 18251) (Lactobacillus fermentum), this protein is Large ribosomal subunit protein bL9.